Consider the following 137-residue polypeptide: L-ectoine synthase (137 aa).

Residues 115 to 137 form a disordered region; the sequence is EVHDESGAYPADPELAREPVAAD.

This sequence belongs to the ectoine synthase family.

It carries out the reaction (2S)-4-acetamido-2-aminobutanoate = L-ectoine + H2O. Its pathway is amine and polyamine biosynthesis; ectoine biosynthesis; L-ectoine from L-aspartate 4-semialdehyde: step 3/3. Functionally, catalyzes the circularization of gamma-N-acetyl-alpha,gamma-diaminobutyric acid (ADABA) to ectoine (1,4,5,6-tetrahydro-2-methyl-4-pyrimidine carboxylic acid), which is an excellent osmoprotectant. The polypeptide is L-ectoine synthase (Sphingopyxis alaskensis (strain DSM 13593 / LMG 18877 / RB2256) (Sphingomonas alaskensis)).